Reading from the N-terminus, the 690-residue chain is Glycine--tRNA ligase beta subunit (690 aa).

The protein belongs to the class-II aminoacyl-tRNA synthetase family. Tetramer of two alpha and two beta subunits.

It is found in the cytoplasm. It catalyses the reaction tRNA(Gly) + glycine + ATP = glycyl-tRNA(Gly) + AMP + diphosphate. The sequence is that of Glycine--tRNA ligase beta subunit from Syntrophus aciditrophicus (strain SB).